Reading from the N-terminus, the 484-residue chain is MGKNKKKTGKKAKSHPHVEDVDETVNKPEEIINSVNVTVPPKMSTDPEADGIVASPDDEGKDLSEGVDKQKVNDGLTVDTINPLEDKKAGDEMKELREEIERLKLELSHKKDQETPNEDFKNELANVIKERDEFKTQYDTLLSKISSMKSIFNKMKEAQKQLEEVQEQLTEYESQNLKLKKKLEATKTENSELQSTIVTLNTELENLEKEQESTEEVFLEYESRIEALEDEKHDIIEKHSKELNTYRKEKDQLNLQVQELMIILENNKQDISDLRTERDELRQALESHEKEKAVLKNSLNDLELKIEEVDNKREEEARERDQEVKSLRSQLDTEIETHNNDTEALESMKKQLEAMKEDASMKEKYEEESKQHILQIGKLRHEAIILNEHLTKALAMLKKSSDSESVDKELISNLLISFVSIPRADPRKFEVLELLSNFLNWDEDKKQQAGLISNNESKNSSAVSRTESFVSLWTNYLEKESEKD.

Over residues 1–15 (MGKNKKKTGKKAKSH) the composition is skewed to basic residues. The disordered stretch occupies residues 1-75 (MGKNKKKTGK…GVDKQKVNDG (75 aa)). Residues 16–30 (PHVEDVDETVNKPEE) are compositionally biased toward basic and acidic residues. Serine 55 and serine 64 each carry phosphoserine. Positions 61 to 72 (KDLSEGVDKQKV) are enriched in basic and acidic residues. Residues 84-383 (LEDKKAGDEM…LQIGKLRHEA (300 aa)) adopt a coiled-coil conformation. A GRIP domain is found at 401–452 (SDSESVDKELISNLLISFVSIPRADPRKFEVLELLSNFLNWDEDKKQQAGLI). Serine 468 bears the Phosphoserine mark.

It localises to the golgi apparatus lumen. Involved in the structural organization of the cis-Golgi and in vesicle targeting/fusion stages of ER to Golgi transport. The chain is GRIP domain-containing protein RUD3 (RUD3) from Saccharomyces cerevisiae (strain ATCC 204508 / S288c) (Baker's yeast).